Here is a 415-residue protein sequence, read N- to C-terminus: Serine hydroxymethyltransferase (415 aa).

(6S)-5,6,7,8-tetrahydrofolate contacts are provided by residues L117 and 121 to 123 (GHL). K226 is subject to N6-(pyridoxal phosphate)lysine. 349-351 (SPF) lines the (6S)-5,6,7,8-tetrahydrofolate pocket.

Belongs to the SHMT family. Homodimer. Requires pyridoxal 5'-phosphate as cofactor.

It localises to the cytoplasm. The enzyme catalyses (6R)-5,10-methylene-5,6,7,8-tetrahydrofolate + glycine + H2O = (6S)-5,6,7,8-tetrahydrofolate + L-serine. It functions in the pathway one-carbon metabolism; tetrahydrofolate interconversion. The protein operates within amino-acid biosynthesis; glycine biosynthesis; glycine from L-serine: step 1/1. Catalyzes the reversible interconversion of serine and glycine with tetrahydrofolate (THF) serving as the one-carbon carrier. This reaction serves as the major source of one-carbon groups required for the biosynthesis of purines, thymidylate, methionine, and other important biomolecules. Also exhibits THF-independent aldolase activity toward beta-hydroxyamino acids, producing glycine and aldehydes, via a retro-aldol mechanism. The chain is Serine hydroxymethyltransferase from Geobacter sp. (strain M21).